The sequence spans 307 residues: NAD kinase 1 (307 aa).

D67 (proton acceptor) is an active-site residue. Residues 67 to 68, 149 to 150, R179, and D181 contribute to the NAD(+) site; these read DG and ND.

Belongs to the NAD kinase family. Requires a divalent metal cation as cofactor.

The protein resides in the cytoplasm. It catalyses the reaction NAD(+) + ATP = ADP + NADP(+) + H(+). Its function is as follows. Involved in the regulation of the intracellular balance of NAD and NADP, and is a key enzyme in the biosynthesis of NADP. Catalyzes specifically the phosphorylation on 2'-hydroxyl of the adenosine moiety of NAD to yield NADP. The chain is NAD kinase 1 from Prochlorococcus marinus (strain SARG / CCMP1375 / SS120).